The following is a 136-amino-acid chain: Large ribosomal subunit protein uL13 (136 aa).

It belongs to the universal ribosomal protein uL13 family. As to quaternary structure, part of the 50S ribosomal subunit.

This protein is one of the early assembly proteins of the 50S ribosomal subunit, although it is not seen to bind rRNA by itself. It is important during the early stages of 50S assembly. The protein is Large ribosomal subunit protein uL13 of Thermoplasma acidophilum (strain ATCC 25905 / DSM 1728 / JCM 9062 / NBRC 15155 / AMRC-C165).